The following is a 109-amino-acid chain: Nucleoid-associated protein BCB4264_A0025 (109 aa).

It belongs to the YbaB/EbfC family. In terms of assembly, homodimer.

It localises to the cytoplasm. It is found in the nucleoid. Its function is as follows. Binds to DNA and alters its conformation. May be involved in regulation of gene expression, nucleoid organization and DNA protection. The protein is Nucleoid-associated protein BCB4264_A0025 of Bacillus cereus (strain B4264).